Consider the following 114-residue polypeptide: Small ribosomal subunit protein bS6 (114 aa).

This sequence belongs to the bacterial ribosomal protein bS6 family.

Binds together with bS18 to 16S ribosomal RNA. In Protochlamydia amoebophila (strain UWE25), this protein is Small ribosomal subunit protein bS6.